Reading from the N-terminus, the 201-residue chain is Urease accessory protein UreG (201 aa).

A GTP-binding site is contributed by 11–18; that stretch reads GPVGSGKT.

This sequence belongs to the SIMIBI class G3E GTPase family. UreG subfamily. In terms of assembly, homodimer. UreD, UreF and UreG form a complex that acts as a GTP-hydrolysis-dependent molecular chaperone, activating the urease apoprotein by helping to assemble the nickel containing metallocenter of UreC. The UreE protein probably delivers the nickel.

The protein resides in the cytoplasm. Facilitates the functional incorporation of the urease nickel metallocenter. This process requires GTP hydrolysis, probably effectuated by UreG. This Prochlorococcus marinus subsp. pastoris (strain CCMP1986 / NIES-2087 / MED4) protein is Urease accessory protein UreG.